Here is a 231-residue protein sequence, read N- to C-terminus: Cytochrome c oxidase subunit 2 (231 aa).

At 1–14 (MAHPSQLGLQDAAS) the chain is on the mitochondrial intermembrane side. A helical transmembrane segment spans residues 15-45 (PVMEELLHFHDHALMIVFLISTLVFYIILAM). Topologically, residues 46–59 (MTTKMTDKYILDAQ) are mitochondrial matrix. Residues 60–87 (EIEIVWTLLPAIVLILVALPSLRILYLI) form a helical membrane-spanning segment. Residues 88 to 231 (DEVENPHLTI…WSSSMLEEAX (144 aa)) are Mitochondrial intermembrane-facing. Residues histidine 161, cysteine 196, glutamate 198, cysteine 200, histidine 204, and methionine 207 each coordinate Cu cation. Residue glutamate 198 coordinates Mg(2+).

This sequence belongs to the cytochrome c oxidase subunit 2 family. As to quaternary structure, component of the cytochrome c oxidase (complex IV, CIV), a multisubunit enzyme composed of 14 subunits. The complex is composed of a catalytic core of 3 subunits MT-CO1, MT-CO2 and MT-CO3, encoded in the mitochondrial DNA, and 11 supernumerary subunits COX4I, COX5A, COX5B, COX6A, COX6B, COX6C, COX7A, COX7B, COX7C, COX8 and NDUFA4, which are encoded in the nuclear genome. The complex exists as a monomer or a dimer and forms supercomplexes (SCs) in the inner mitochondrial membrane with NADH-ubiquinone oxidoreductase (complex I, CI) and ubiquinol-cytochrome c oxidoreductase (cytochrome b-c1 complex, complex III, CIII), resulting in different assemblies (supercomplex SCI(1)III(2)IV(1) and megacomplex MCI(2)III(2)IV(2)). Found in a complex with TMEM177, COA6, COX18, COX20, SCO1 and SCO2. Interacts with TMEM177 in a COX20-dependent manner. Interacts with COX20. Interacts with COX16. Cu cation is required as a cofactor.

It is found in the mitochondrion inner membrane. The enzyme catalyses 4 Fe(II)-[cytochrome c] + O2 + 8 H(+)(in) = 4 Fe(III)-[cytochrome c] + 2 H2O + 4 H(+)(out). Component of the cytochrome c oxidase, the last enzyme in the mitochondrial electron transport chain which drives oxidative phosphorylation. The respiratory chain contains 3 multisubunit complexes succinate dehydrogenase (complex II, CII), ubiquinol-cytochrome c oxidoreductase (cytochrome b-c1 complex, complex III, CIII) and cytochrome c oxidase (complex IV, CIV), that cooperate to transfer electrons derived from NADH and succinate to molecular oxygen, creating an electrochemical gradient over the inner membrane that drives transmembrane transport and the ATP synthase. Cytochrome c oxidase is the component of the respiratory chain that catalyzes the reduction of oxygen to water. Electrons originating from reduced cytochrome c in the intermembrane space (IMS) are transferred via the dinuclear copper A center (CU(A)) of subunit 2 and heme A of subunit 1 to the active site in subunit 1, a binuclear center (BNC) formed by heme A3 and copper B (CU(B)). The BNC reduces molecular oxygen to 2 water molecules using 4 electrons from cytochrome c in the IMS and 4 protons from the mitochondrial matrix. In Latimeria chalumnae (Coelacanth), this protein is Cytochrome c oxidase subunit 2 (MT-CO2).